The primary structure comprises 573 residues: Chromosomal replication initiator protein DnaA (573 aa).

Residues 1–85 (MSQNSSSLLE…TKVLSMRMGR (85 aa)) are domain I, interacts with DnaA modulators. The domain II stretch occupies residues 85 to 231 (RSFSLAVSVE…TPAHNPNREV (147 aa)). Positions 91-232 (VSVEPSRDGE…PAHNPNREVS (142 aa)) are disordered. A compositionally biased stretch (low complexity) spans 116–169 (PYPGQGPQSPQGQQGQQGQHPVQQEVRAHAPAPHQQGQHQAAQHQPPANQAPGQ). Over residues 178-191 (QASQSAGAWEQTHS) the composition is skewed to polar residues. Over residues 202-213 (SPAPVEPPPQPA) the composition is skewed to pro residues. Residues 232–448 (SLNPKYTFEN…GALIRVSAYS (217 aa)) are domain III, AAA+ region. ATP is bound by residues G276, G278, K279, and T280. The segment at 449–573 (SLINQPIDKE…TQLIKSRGRN (125 aa)) is domain IV, binds dsDNA.

This sequence belongs to the DnaA family. In terms of assembly, oligomerizes as a right-handed, spiral filament on DNA at oriC.

It is found in the cytoplasm. Its function is as follows. Plays an essential role in the initiation and regulation of chromosomal replication. ATP-DnaA binds to the origin of replication (oriC) to initiate formation of the DNA replication initiation complex once per cell cycle. Binds the DnaA box (a 9 base pair repeat at the origin) and separates the double-stranded (ds)DNA. Forms a right-handed helical filament on oriC DNA; dsDNA binds to the exterior of the filament while single-stranded (ss)DNA is stabiized in the filament's interior. The ATP-DnaA-oriC complex binds and stabilizes one strand of the AT-rich DNA unwinding element (DUE), permitting loading of DNA polymerase. After initiation quickly degrades to an ADP-DnaA complex that is not apt for DNA replication. Binds acidic phospholipids. This is Chromosomal replication initiator protein DnaA from Corynebacterium efficiens (strain DSM 44549 / YS-314 / AJ 12310 / JCM 11189 / NBRC 100395).